The primary structure comprises 458 residues: Exodeoxyribonuclease 7 large subunit (458 aa).

Belongs to the XseA family. In terms of assembly, heterooligomer composed of large and small subunits.

Its subcellular location is the cytoplasm. The enzyme catalyses Exonucleolytic cleavage in either 5'- to 3'- or 3'- to 5'-direction to yield nucleoside 5'-phosphates.. Functionally, bidirectionally degrades single-stranded DNA into large acid-insoluble oligonucleotides, which are then degraded further into small acid-soluble oligonucleotides. This chain is Exodeoxyribonuclease 7 large subunit, found in Serratia proteamaculans (strain 568).